Here is a 238-residue protein sequence, read N- to C-terminus: Proenkephalin-A (238 aa).

An N-terminal signal peptide occupies residues 1–25; sequence MAASALSTCLWMLVLGTCVSLVVGT. Intrachain disulfides connect C27–C50, C31–C54, and C34–C66. The disordered stretch occupies residues 76–103; sequence QSPLASQQDQERVDAMMADEEDATSPEH. Propeptides lie at residues 124–167, 177–195, and 206–230; these read SSAS…AEAV, ADRG…GRVL, and VGRP…SELQ.

Belongs to the opioid neuropeptide precursor family. In terms of tissue distribution, expressed by the venom gland. Moderately expressed in the venom gland transcriptome.

Its subcellular location is the secreted. Functionally, met-enkephalins compete with and mimic the effects of opiate drugs. They play a role in a number of physiologic functions, including pain perception and responses to stress. Enkephalin peptides found in Meiacanthus fangblennies induce physiological effects via their interaction with delta-type opioid receptors (OPRD1) (tested on M.grammistes). Therefore, finding a proenkephalin sequence in M.atrodorsalis venom suggests that this protein act in the same manner. The sequence is that of Proenkephalin-A from Meiacanthus atrodorsalis (Forktail blenny).